The sequence spans 176 residues: dCTP deaminase (176 aa).

DCTP is bound by residues 99–104 and Asp-115; that span reads RSTLAR. Residue Glu-125 is the Proton donor/acceptor of the active site. Residue Gln-163 coordinates dCTP.

This sequence belongs to the dCTP deaminase family. In terms of assembly, homotrimer.

The enzyme catalyses dCTP + H2O + H(+) = dUTP + NH4(+). It participates in pyrimidine metabolism; dUMP biosynthesis; dUMP from dCTP (dUTP route): step 1/2. In terms of biological role, catalyzes the deamination of dCTP to dUTP. In Pyrobaculum arsenaticum (strain DSM 13514 / JCM 11321 / PZ6), this protein is dCTP deaminase.